The following is a 957-amino-acid chain: Bifunctional glutamine synthetase adenylyltransferase/adenylyl-removing enzyme (957 aa).

Residues Met-1–Glu-449 form an adenylyl removase region. The segment at Ser-457–Glu-957 is adenylyl transferase.

Belongs to the GlnE family. Requires Mg(2+) as cofactor.

The catalysed reaction is [glutamine synthetase]-O(4)-(5'-adenylyl)-L-tyrosine + phosphate = [glutamine synthetase]-L-tyrosine + ADP. The enzyme catalyses [glutamine synthetase]-L-tyrosine + ATP = [glutamine synthetase]-O(4)-(5'-adenylyl)-L-tyrosine + diphosphate. Functionally, involved in the regulation of glutamine synthetase GlnA, a key enzyme in the process to assimilate ammonia. When cellular nitrogen levels are high, the C-terminal adenylyl transferase (AT) inactivates GlnA by covalent transfer of an adenylyl group from ATP to specific tyrosine residue of GlnA, thus reducing its activity. Conversely, when nitrogen levels are low, the N-terminal adenylyl removase (AR) activates GlnA by removing the adenylyl group by phosphorolysis, increasing its activity. The regulatory region of GlnE binds the signal transduction protein PII (GlnB) which indicates the nitrogen status of the cell. The chain is Bifunctional glutamine synthetase adenylyltransferase/adenylyl-removing enzyme from Photobacterium profundum (strain SS9).